Here is a 703-residue protein sequence, read N- to C-terminus: Protein CNGC15c (703 aa).

Over residues 1–10 (MGFDNPRSER) the composition is skewed to basic and acidic residues. Residues 1 to 23 (MGFDNPRSERFEDDPEISKIPTT) form a disordered region. A run of 5 helical transmembrane segments spans residues 91-111 (IFLV…YLPV), 179-199 (GFWL…WIII), 216-236 (FFII…SSQI), 255-275 (LMLY…LSIE), and 372-392 (FIGE…LFAL). 480–565 (LFDQMDERML…WALDPRPSVI (86 aa)) is an a nucleoside 3',5'-cyclic phosphate binding site. Positions 616 to 644 (RTWAACFIQAAWRRHKKRKEAAELRAKEN) constitute an IQ domain. The disordered stretch occupies residues 676 to 703 (KGVNMHSGTNSGVVSSLQKPTEPDFSDE). A compositionally biased stretch (polar residues) spans 681–694 (HSGTNSGVVSSLQK).

It belongs to the cyclic nucleotide-gated cation channel (TC 1.A.1.5) family. As to quaternary structure, interacts (via N-terminus) with DMI1 (via c-terminus). The Nod factor has no effect on this interaction, implying that the complex is maintained after activation. As to expression, expressed in roots, stems, leaves, flowers and pods.

It is found in the nucleus membrane. Its function is as follows. Cyclic nucleotide-gated channel involved in the establishment of both rhizobial and mycorrhizal associations. Required for full activation of nuclear-localized Ca(2+) oscillations by Nod and Myc factors. Simultaneous activation of the K(+)-permeable channel DMI1 and the Ca(2+) channel CNGC15 can give rise to sustained Ca(2+) oscillations. May function during fertilization in both female and male gametophytic Ca(2+) signaling. This is Protein CNGC15c from Medicago truncatula (Barrel medic).